Consider the following 947-residue polypeptide: MEFSWGSGQESQRLLLSFLFLAIWEPGNSQLHYSIPEEAKHGTFVGRIAQDLGLELAELVPRLFRVASKDRGDLLEVNLQNGILFVNSRIDREELCGRSAECSIHLEVIVDRPLQVFHVEVEVRDINDNPPTFPTTQKNLFIAESRPLDTWFPLEGASDSDIGINAVLTYRLSPNDYFSLEKPTNSERVKGLGLILRKSLDREETPELFLVLTVTDGGKPELTGSVQLLITVLDANDNSPVFDRSLYTVKLPENVPNGTLVVKVNASDLDEGANGEVMYSFSTDISPNVKNKFHIDPVTGEIAVKGYIDFEECTSYEILIEGIDKGQLPLSGHCKVIVQVEDINDNAPELEFKSLSLPIRENAPVGTVIALISVFDPDTGVNGQVTCSLTPQVPFKLVSTFKNYYSLVLDSALDRETTADYKVVVIARDGGLPSLWATASVSVEVADVNDNAPAFAQPEYTVFVKENNPPGAHIFTVSAVDADSQENALVSYSLVERRVGERLLSSYVSVHAESGKVFALQPLDHEELELLQFQVSARDAGVPALGSNVTLQVFVLDENDNAPTLLEPEAGISGGIVSRLVSRSVGAGHVVAKVRAVDADSGYNAWLSYELQSSEGNSRSLFRVGLYTGEISTTRSLDEADSPRQRLLVLVKDHGDPAMMVTATVLVSLVENGPLPKAPSRVSTRVTNAEASLVDVNVYLIIAICAVSSLLVLTLLLYSALRCSTVPSESVCGPPKPVMVCSSAVGSWSYSQQRRQRVCSGEYPPKTDLMAFSPSLSDSRDREDQLQSTEDSSGKPRQPNPDWRYSASLRAGMHSSVHLEEAGILRAGPGGPDQQWPTVSSATPEPEAGEVSPPVGAGVNSNSWTFKYGPGNPKQPGPGELPDKFIIPGSPAIISIRQESANNQIDKSDFITFGKKEETKKKKKKKKGNKTQEKKEKGNSTTDNSDQ.

The first 29 residues, 1–29 (MEFSWGSGQESQRLLLSFLFLAIWEPGNS), serve as a signal peptide directing secretion. Cadherin domains are found at residues 30-133 (QLHY…PPTF), 134-242 (PTTQ…SPVF), 243-350 (DRSL…APEL), 351-455 (EFKS…APAF), 456-565 (AQPE…APTL), and 573-681 (SGGI…APSR). Topologically, residues 30–697 (QLHYSIPEEA…NAEASLVDVN (668 aa)) are extracellular. The cysteines at positions 96 and 102 are disulfide-linked. Residues N257 and N265 are each glycosylated (N-linked (GlcNAc...) asparagine). N548 carries an N-linked (GlcNAc...) asparagine glycan. The chain crosses the membrane as a helical span at residues 698–718 (VYLIIAICAVSSLLVLTLLLY). Over 719 to 947 (SALRCSTVPS…GNSTTDNSDQ (229 aa)) the chain is Cytoplasmic. 6 PXXP repeats span residues 734 to 737 (PPKP), 774 to 777 (PSLS), 796 to 799 (PRQP), 829 to 832 (PGGP), 870 to 873 (PGNP), and 888 to 891 (PGSP). The segment at 734 to 891 (PPKPVMVCSS…PDKFIIPGSP (158 aa)) is 6 X 4 AA repeats of P-X-X-P. Positions 738–947 (VMVCSSAVGS…GNSTTDNSDQ (210 aa)) are required for interaction with FYN. 2 disordered regions span residues 761–805 (GEYP…DWRY) and 824–853 (ILRA…EVSP). The interval 897–947 (RQESANNQIDKSDFITFGKKEETKKKKKKKKGNKTQEKKEKGNSTTDNSDQ) is disordered. Residues 906–920 (DKSDFITFGKKEETK) show a composition bias toward basic and acidic residues.

In terms of assembly, forms homodimers in trans (molecules expressed by two different cells). Forms promiscuous heterodimers in cis (at the plasma membrane of the same cell) with other protocadherins. Interacts with FYN. Detected in brain.

Its subcellular location is the cell membrane. Functionally, calcium-dependent cell-adhesion protein involved in cells self-recognition and non-self discrimination. Thereby, it is involved in the establishment and maintenance of specific neuronal connections in the brain. This is Protocadherin alpha-4 from Rattus norvegicus (Rat).